A 446-amino-acid chain; its full sequence is MFHISTLDQIKIAYIGGGSQGWARSLMSDLSIDERMSGTVALYDLDFEAAQKNEVIGNHSGNGRWRYEAVSTLKKALSAADIVIISILPGSLDDMEVDVHLPERCGIYQSVGDTVGPGGIIRGLRAVPIFAEIARAIRDYAPESWVINYTNPMSVCTRVLYKVFPGIKAIGCCHEVFGTQKLLAEMVTERLGIEVPRREDIRVNVLGINHFTWITKASYRHIDLLPIFREFSAHYGESGYELEGECWRDSVFCSAHRVAFDLFETYGAIPAAGDRHLAEFLPGPYLKQPEVWKFHLTPISFRKQDRAEKRQETERLIVQQRGVAEKASGEEGVNIIAALLGLGELVTNVNMPNQGQVLNLPIQAIVETNAFITRNRVQPILSGALPKGVEMLAARHISNQEAVADAGLTKDTGLAFQAFLNDPLVQIDRSDAEQLFNDMLQCIMQS.

10-72 lines the NAD(+) pocket; the sequence is IKIAYIGGGS…GRWRYEAVST (63 aa). Asparagine 151 is a binding site for substrate. Cysteine 173 lines the Mn(2+) pocket. Histidine 174 (proton donor) is an active-site residue. A Mn(2+)-binding site is contributed by histidine 210.

It belongs to the glycosyl hydrolase 4 family. Homotetramer. The cofactor is NAD(+). Mn(2+) is required as a cofactor.

The catalysed reaction is [(1-&gt;4)-alpha-D-galacturonosyl](n) + H2O = alpha-D-galacturonate + [(1-&gt;4)-alpha-D-galacturonosyl](n-1). Its function is as follows. Alpha-galacturonidase able to catalyze the hydrolysis of the chromogenic substrate p-nitrophenyl-alpha-D-galacturonic acid (pNPalphaGalUA), and of the probable natural substrate alpha-1,4-di-galacturonate (GalUA(2)). Can neither hydrolyze pNPbetaGalUA, nor the stereoisomeric pNPalphaGlcUA. Does not display alpha- or beta-glucosidase activity as it fails to hydrolyze melibiose, raffinose, lactose and the chromogenic analogs, pNPalphaGal and pNPbetaGal. Cannot use the following compounds as substrates: pNP-N-acetyl-alpha- and beta-D-galactosaminide, pNP-N-acetyl-alpha- and beta-D-glucosaminide, pNP-alpha-L- and beta-L-arabinopyranoside, pNP-alpha- and beta-D-glucuronide, pNP-alpha- and beta-D-glucopyranoside, pNP-alpha- and beta-D-glucopyranoside 6-phosphate, pNP-alpha-D-galactopyranoside 6-phosphate and oNP-beta-D-galactopyranoside 6-phosphate. In Bacillus subtilis (strain 168), this protein is Alpha-galacturonidase (lplD).